A 577-amino-acid chain; its full sequence is Steryl-sulfatase (577 aa).

The N-terminal stretch at 1–19 is a signal peptide; it reads MLWPCLLALLLSQLNFLCA. The Lumenal segment spans residues 21-183; that stretch reads RPGPGPNFLL…GTVFGSAQQV (163 aa). Ca(2+)-binding residues include aspartate 34 and aspartate 35. A glycan (N-linked (GlcNAc...) asparagine) is linked at asparagine 46. Cysteine 74 provides a ligand contact to Ca(2+). Cysteine 74 serves as the catalytic Nucleophile. Cysteine 74 is modified (3-oxoalanine (Cys)). Residue histidine 135 is part of the active site. Disulfide bonds link cysteine 140–cysteine 147 and cysteine 169–cysteine 241. Residues 184-207 form a helical membrane-spanning segment; sequence FVVLPMNILGAVLLAMALARWAGL. Residues 208–211 lie on the Cytoplasmic side of the membrane; it reads ARPP. A helical membrane pass occupies residues 212–233; the sequence is GWVFGVTVAAMAAVGGAYVAFL. Over 234-577 the chain is Lumenal; the sequence is YHFRPANCFL…PLACRCAGDG (344 aa). N-linked (GlcNAc...) asparagine glycosylation occurs at asparagine 332. Residues aspartate 341 and histidine 342 each contribute to the Ca(2+) site. Disulfide bonds link cysteine 445–cysteine 488, cysteine 480–cysteine 486, and cysteine 561–cysteine 571. A glycan (N-linked (GlcNAc...) asparagine) is linked at asparagine 458.

It belongs to the sulfatase family. Homodimer. Requires Ca(2+) as cofactor. Post-translationally, the conversion to 3-oxoalanine (also known as C-formylglycine, FGly), of a serine or cysteine residue in prokaryotes and of a cysteine residue in eukaryotes, is critical for catalytic activity.

It localises to the microsome membrane. Its subcellular location is the endoplasmic reticulum membrane. It carries out the reaction dehydroepiandrosterone 3-sulfate + H2O = 3beta-hydroxyandrost-5-en-17-one + sulfate + H(+). The catalysed reaction is estrone 3-sulfate + H2O = estrone + sulfate + H(+). Functionally, catalyzes the conversion of sulfated steroid precursors, such as dehydroepiandrosterone sulfate (DHEA-S) and estrone sulfate to the free steroid. The sequence is that of Steryl-sulfatase (Sts) from Rattus norvegicus (Rat).